Reading from the N-terminus, the 508-residue chain is MASGAVADHQIEAVSGKRVAVVGAGVSGLAAAYKLKSRGLNVTVFEADGRVGGKLRSVMQNGLIWDEGANTMTEAEPEVGSLLDDLGLREKQQFPISQKKRYIVRNGVPVMLPTNPIELVTSSVLSTQSKFQILLEPFLWKKKSSKVSDASAEESVSEFFQRHFGQEVVDYLIDPFVGGTSAADPDSLSMKHSFPDLWNVEKSFGSIIVGAIRTKFAAKGGKSRDTKSSPGTKKGSRGSFSFKGGMQILPDTLCKSLSHDEINLDSKVLSLSYNSGSRQENWSLSCVSHNETQRQNPHYDAVIMTAPLCNVKEMKVMKGGQPFQLNFLPEINYMPLSVLITTFTKEKVKRPLEGFGVLIPSKEQKHGFKTLGTLFSSMMFPDRSPSDVHLYTTFIGGSRNQELAKASTDELKQVVTSDLQRLLGVEGEPVSVNHYYWRKAFPLYDSSYDSVMEAIDKMENDLPGFFYAGNHRGGLSVGKSIASGCKAADLVISYLESCSNDKKPNDSL.

A chloroplast and mitochondrion-targeting transit peptide spans 1–22 (MASGAVADHQIEAVSGKRVAVV). FAD is bound by residues 23-28 (GAGVSG), 46-47 (EA), and 68-71 (GANT). The disordered stretch occupies residues 219–239 (KGGKSRDTKSSPGTKKGSRGS). FAD contacts are provided by residues V268 and 475–477 (LSV).

It belongs to the protoporphyrinogen/coproporphyrinogen oxidase family. Protoporphyrinogen oxidase subfamily. The cofactor is FAD.

The protein localises to the plastid. It is found in the chloroplast. Its subcellular location is the mitochondrion. The catalysed reaction is protoporphyrinogen IX + 3 O2 = protoporphyrin IX + 3 H2O2. It functions in the pathway porphyrin-containing compound metabolism; protoporphyrin-IX biosynthesis; protoporphyrin-IX from protoporphyrinogen-IX: step 1/1. It participates in porphyrin-containing compound metabolism; chlorophyll biosynthesis. In terms of biological role, catalyzes the 6-electron oxidation of protoporphyrinogen-IX to form protoporphyrin-IX. The protein is Protoporphyrinogen oxidase 2, chloroplastic/mitochondrial (PPOX2) of Arabidopsis thaliana (Mouse-ear cress).